The following is a 119-amino-acid chain: Divalent-cation tolerance protein CutA (119 aa).

3 residues coordinate Cu cation: Cys23, His90, and His91.

This sequence belongs to the CutA family. In terms of assembly, homotrimer. The cofactor is Cu cation.

Its subcellular location is the cytoplasm. In terms of biological role, involved in resistance toward heavy metals. This is Divalent-cation tolerance protein CutA from Yersinia pseudotuberculosis serotype O:1b (strain IP 31758).